The sequence spans 892 residues: Alanine--tRNA ligase (892 aa).

Zn(2+)-binding residues include His-574, His-578, Cys-676, and His-680.

This sequence belongs to the class-II aminoacyl-tRNA synthetase family. Zn(2+) is required as a cofactor.

The protein localises to the cytoplasm. It carries out the reaction tRNA(Ala) + L-alanine + ATP = L-alanyl-tRNA(Ala) + AMP + diphosphate. Its function is as follows. Catalyzes the attachment of alanine to tRNA(Ala) in a two-step reaction: alanine is first activated by ATP to form Ala-AMP and then transferred to the acceptor end of tRNA(Ala). Also edits incorrectly charged Ser-tRNA(Ala) and Gly-tRNA(Ala) via its editing domain. In Prochlorococcus marinus (strain SARG / CCMP1375 / SS120), this protein is Alanine--tRNA ligase.